Here is a 943-residue protein sequence, read N- to C-terminus: Isoleucine--tRNA ligase (943 aa).

The short motif at 59–69 (PYANGQIHLGH) is the 'HIGH' region element. An L-isoleucyl-5'-AMP-binding site is contributed by Glu-577. The 'KMSKS' region motif lies at 618–622 (KMSKS). Position 621 (Lys-621) interacts with ATP. Positions 906, 909, 926, and 929 each coordinate Zn(2+).

This sequence belongs to the class-I aminoacyl-tRNA synthetase family. IleS type 1 subfamily. Monomer. Requires Zn(2+) as cofactor.

The protein resides in the cytoplasm. The catalysed reaction is tRNA(Ile) + L-isoleucine + ATP = L-isoleucyl-tRNA(Ile) + AMP + diphosphate. In terms of biological role, catalyzes the attachment of isoleucine to tRNA(Ile). As IleRS can inadvertently accommodate and process structurally similar amino acids such as valine, to avoid such errors it has two additional distinct tRNA(Ile)-dependent editing activities. One activity is designated as 'pretransfer' editing and involves the hydrolysis of activated Val-AMP. The other activity is designated 'posttransfer' editing and involves deacylation of mischarged Val-tRNA(Ile). This chain is Isoleucine--tRNA ligase, found in Xanthomonas campestris pv. campestris (strain 8004).